A 496-amino-acid chain; its full sequence is Ankyrin repeat domain-containing protein 34A (496 aa).

4 ANK repeats span residues 4–33, 37–72, 76–106, and 110–139; these read TEGH…YVNE, QGET…DPNI, LGRT…DPSV, and AGAS…AKGT. Gln15 is modified (N5-methylglutamine). Polar residues-rich tracts occupy residues 147-162 and 180-191; these read DTSP…YLNS and FCTSPSEIQLQT. The interval 147–473 is disordered; sequence DTSPSGTKKT…TKRKLVRRHS (327 aa). Residues 204–214 show a composition bias toward basic and acidic residues; that stretch reads AQEEEEKRDVF. Positions 218–233 are enriched in pro residues; that stretch reads LPKPPDDPSPSEPLPK. Over residues 234 to 243 the composition is skewed to basic residues; sequence PPRHPPKPLK. Thr316 bears the Phosphothreonine mark. A compositionally biased stretch (basic residues) spans 463–473; the sequence is RTKRKLVRRHS.

This sequence belongs to the ANKRD34 family. Methylated at Gln-15 by N6AMT1.

This Homo sapiens (Human) protein is Ankyrin repeat domain-containing protein 34A (ANKRD34A).